We begin with the raw amino-acid sequence, 290 residues long: Light-independent protochlorophyllide reductase iron-sulfur ATP-binding protein (290 aa).

ATP-binding positions include 10-15 (GIGKST) and K39. S14 lines the Mg(2+) pocket. Residues C95 and C129 each contribute to the [4Fe-4S] cluster site. Residue 180–181 (NR) participates in ATP binding.

Belongs to the NifH/BchL/ChlL family. Homodimer. Protochlorophyllide reductase is composed of three subunits; ChlL, ChlN and ChlB. It depends on [4Fe-4S] cluster as a cofactor.

Its subcellular location is the plastid. The protein localises to the chloroplast. It catalyses the reaction chlorophyllide a + oxidized 2[4Fe-4S]-[ferredoxin] + 2 ADP + 2 phosphate = protochlorophyllide a + reduced 2[4Fe-4S]-[ferredoxin] + 2 ATP + 2 H2O. It participates in porphyrin-containing compound metabolism; chlorophyll biosynthesis (light-independent). In terms of biological role, component of the dark-operative protochlorophyllide reductase (DPOR) that uses Mg-ATP and reduced ferredoxin to reduce ring D of protochlorophyllide (Pchlide) to form chlorophyllide a (Chlide). This reaction is light-independent. The L component serves as a unique electron donor to the NB-component of the complex, and binds Mg-ATP. This chain is Light-independent protochlorophyllide reductase iron-sulfur ATP-binding protein, found in Zygnema circumcarinatum (Green alga).